We begin with the raw amino-acid sequence, 313 residues long: Protein-methionine-sulfoxide reductase catalytic subunit MsrP (313 aa).

A signal peptide (tat-type signal) is located at residues 1 to 44 (MARWRPDMAEREATPEALYLRRREFLALGAAGAVGLLVARGARA). Residues Asn76, 79–80 (YE), Cys134, Thr169, Asn217, Arg222, and 233–235 (GAK) each bind Mo-molybdopterin.

The protein belongs to the MsrP family. In terms of assembly, heterodimer of a catalytic subunit (MsrP) and a heme-binding subunit (MsrQ). It depends on Mo-molybdopterin as a cofactor. In terms of processing, predicted to be exported by the Tat system. The position of the signal peptide cleavage has not been experimentally proven.

It localises to the periplasm. It carries out the reaction L-methionyl-[protein] + a quinone + H2O = L-methionyl-(S)-S-oxide-[protein] + a quinol. The enzyme catalyses L-methionyl-[protein] + a quinone + H2O = L-methionyl-(R)-S-oxide-[protein] + a quinol. Functionally, part of the MsrPQ system that repairs oxidized periplasmic proteins containing methionine sulfoxide residues (Met-O), using respiratory chain electrons. Thus protects these proteins from oxidative-stress damage caused by reactive species of oxygen and chlorine generated by the host defense mechanisms. MsrPQ is essential for the maintenance of envelope integrity under bleach stress, rescuing a wide series of structurally unrelated periplasmic proteins from methionine oxidation. The catalytic subunit MsrP is non-stereospecific, being able to reduce both (R-) and (S-) diastereoisomers of methionine sulfoxide. The chain is Protein-methionine-sulfoxide reductase catalytic subunit MsrP from Anaeromyxobacter sp. (strain K).